Here is a 193-residue protein sequence, read N- to C-terminus: Auxin-responsive protein IAA23 (193 aa).

Polar residues predominate over residues 1 to 12; the sequence is MSTSSGADSSPP. The disordered stretch occupies residues 1–66; the sequence is MSTSSGADSS…SPKARAVGWP (66 aa). The segment covering 21–36 has biased composition (low complexity); the sequence is TALTLALPGSSSSSSS. Positions 23–27 match the EAR-like (transcriptional repression) motif; that stretch reads LTLAL. Residues 39–53 show a composition bias toward basic and acidic residues; sequence DPERKRAAHADHADA. The region spanning 83–191 is the PB1 domain; sequence AKLVKVAVDG…EAVNLSPRRS (109 aa).

Belongs to the Aux/IAA family. In terms of assembly, homodimers and heterodimers. Highly expressed in roots. Expressed in seedlings.

Its subcellular location is the nucleus. Aux/IAA proteins are short-lived transcriptional factors that function as repressors of early auxin response genes at low auxin concentrations. This Oryza sativa subsp. japonica (Rice) protein is Auxin-responsive protein IAA23 (IAA23).